Consider the following 713-residue polypeptide: Calpain-1 catalytic subunit (713 aa).

The 300-residue stretch at 55–354 (LFQDDAFPPV…FTKLEICNLT (300 aa)) folds into the Calpain catalytic domain. Active-site residues include C115, H272, and N296. The residue at position 354 (T354) is a Phosphothreonine. Positions 355 to 525 (PDALKSRTLR…KKAGTQELDD (171 aa)) are domain III. The interval 526–541 (QIQANLPDEKVLSEEE) is linker. Positions 542–712 (IDDNFKTLFS…LFKWLQLTMF (171 aa)) are domain IV. 4 EF-hand domains span residues 557 to 575 (DMEI…IISK), 584 to 609 (FSLE…LVEF), 614 to 649 (NRIR…AGFK), and 679 to 713 (VRLE…TMFA). Positions 597, 599, 601, 603, 608, 627, 629, 631, 633, and 638 each coordinate Ca(2+).

It belongs to the peptidase C2 family. In terms of assembly, forms a heterodimer with a small (regulatory) subunit CAPNS1. The cofactor is Ca(2+). Post-translationally, undergoes calcium-induced successive autoproteolytic cleavages that generate a membrane-bound 78 kDa active form and an intracellular 75 kDa active form. Calpastatin reduces with high efficiency the transition from 78 kDa to 75 kDa calpain forms.

The protein resides in the cytoplasm. It is found in the cell membrane. The enzyme catalyses Broad endopeptidase specificity.. Its activity is regulated as follows. Activated by micromolar concentrations of calcium and inhibited by calpastatin. In terms of biological role, calcium-regulated non-lysosomal thiol-protease which catalyzes limited proteolysis of substrates involved in cytoskeletal remodeling and signal transduction. Proteolytically cleaves CTBP1 at 'Asn-364', 'Gly-377' and 'His-399'. Cleaves and activates caspase-7 (CASP7). This chain is Calpain-1 catalytic subunit, found in Rattus norvegicus (Rat).